A 684-amino-acid chain; its full sequence is MASGLTANKKLRHKITAAALLVTLGVVYGDIGTSPLYVMKSIVAGNGGMGHFDTDFLVGSVSLIFWTLLIITTVKYVLIALRADNNGEGGIFALYTLVRQRARWLVLPAMVGGAALLADGMLTPAVTVTTAIEGLKGVHINGNILIDNQQQVIWVTILIITFLFFIQRFGTDLIGKAFGPIMFVWFTFLGVAGFIALSKDWSMLRALNPYYALHLLVSPDNKMGLFILGSIFLATTGAEALYSDMGHVGRGNIYLSWPYVNICLVLNYFGQAVWLDQNSKVTAFNKITDFNPFFQMLPESIRLGAIILATLAAIIASQALISGSYTLVSEAIKLRFLPRLHIIYPTRLKGQLYIPVVNTILWLACLAIIGYFKTSAEMEGAYGLAITITMLMTTLLLYQYLRSRHAPAVIAIGTLIFFSAIETVFFISSAVKFLHGGYVTAMIAFIILAVMYVWQYGGRIRDDNTYRAEMASLFAYKNQLSELRNDPDYPTYTTNLVYMTQIANDHYIKKEILYSILDKRPKRARVYWFVTVNVTDEPYTAEYTTDTYGTDYMVNVQLYLGFRMEQQVNVFLRQIVNDMMREGELPTQPQKYTTIPDRQVGDWTFVLLHEELSPQTQIKGFQKAIIQARLRLQHIAVSPAQWFGLEYADTIDETVPLVLGKIPITKLNRLTRSQAEAQPEDEDD.

Helical transmembrane passes span 19 to 39 (ALLV…LYVM), 61 to 81 (VSLI…LIAL), 104 to 124 (WLVL…MLTP), 151 to 171 (QVIW…RFGT), 177 to 197 (AFGP…FIAL), 223 to 243 (MGLF…ALYS), 255 to 275 (LSWP…AVWL), 303 to 323 (LGAI…LISG), 352 to 372 (LYIP…IGYF), 381 to 401 (AYGL…YQYL), 407 to 427 (PAVI…VFFI), and 433 to 453 (FLHG…VMYV).

It belongs to the HAK/KUP transporter (TC 2.A.72) family.

It is found in the cell membrane. It catalyses the reaction K(+)(in) + H(+)(in) = K(+)(out) + H(+)(out). Functionally, transport of potassium into the cell. Likely operates as a K(+):H(+) symporter. The protein is Probable potassium transport system protein Kup of Lacticaseibacillus casei (strain BL23) (Lactobacillus casei).